The chain runs to 413 residues: Serine hydroxymethyltransferase (413 aa).

Residues Leu115 and 119–121 contribute to the (6S)-5,6,7,8-tetrahydrofolate site; that span reads GHL. Residue Lys224 is modified to N6-(pyridoxal phosphate)lysine.

This sequence belongs to the SHMT family. As to quaternary structure, homodimer. The cofactor is pyridoxal 5'-phosphate.

The protein localises to the cytoplasm. The catalysed reaction is (6R)-5,10-methylene-5,6,7,8-tetrahydrofolate + glycine + H2O = (6S)-5,6,7,8-tetrahydrofolate + L-serine. It participates in one-carbon metabolism; tetrahydrofolate interconversion. The protein operates within amino-acid biosynthesis; glycine biosynthesis; glycine from L-serine: step 1/1. Catalyzes the reversible interconversion of serine and glycine with tetrahydrofolate (THF) serving as the one-carbon carrier. This reaction serves as the major source of one-carbon groups required for the biosynthesis of purines, thymidylate, methionine, and other important biomolecules. Also exhibits THF-independent aldolase activity toward beta-hydroxyamino acids, producing glycine and aldehydes, via a retro-aldol mechanism. The chain is Serine hydroxymethyltransferase from Mycoplasma capricolum subsp. capricolum (strain California kid / ATCC 27343 / NCTC 10154).